We begin with the raw amino-acid sequence, 102 residues long: Small ribosomal subunit protein uS10 (102 aa).

The protein belongs to the universal ribosomal protein uS10 family. As to quaternary structure, part of the 30S ribosomal subunit.

In terms of biological role, involved in the binding of tRNA to the ribosomes. The sequence is that of Small ribosomal subunit protein uS10 from Kosmotoga olearia (strain ATCC BAA-1733 / DSM 21960 / TBF 19.5.1).